Here is a 316-residue protein sequence, read N- to C-terminus: tRNA dimethylallyltransferase (316 aa).

Residue 9–16 (GPTASGKS) participates in ATP binding. Residue 11 to 16 (TASGKS) participates in substrate binding. 2 interaction with substrate tRNA regions span residues 34 to 37 (DSMQ) and 158 to 162 (QRLAR).

It belongs to the IPP transferase family. In terms of assembly, monomer. Requires Mg(2+) as cofactor.

The catalysed reaction is adenosine(37) in tRNA + dimethylallyl diphosphate = N(6)-dimethylallyladenosine(37) in tRNA + diphosphate. Catalyzes the transfer of a dimethylallyl group onto the adenine at position 37 in tRNAs that read codons beginning with uridine, leading to the formation of N6-(dimethylallyl)adenosine (i(6)A). In Hyphomonas neptunium (strain ATCC 15444), this protein is tRNA dimethylallyltransferase.